The following is a 455-amino-acid chain: Ribulose bisphosphate carboxylase large chain (455 aa).

Position 5 is an N6,N6,N6-trimethyllysine (Lys-5). Asn-114 and Thr-164 together coordinate substrate. Lys-166 functions as the Proton acceptor in the catalytic mechanism. Lys-168 lines the substrate pocket. Residues Lys-192, Asp-194, and Glu-195 each coordinate Mg(2+). Lys-192 is modified (N6-carboxylysine). The active-site Proton acceptor is the His-285. Arg-286, His-318, and Ser-370 together coordinate substrate.

This sequence belongs to the RuBisCO large chain family. Type I subfamily. In terms of assembly, heterohexadecamer of 8 large chains and 8 small chains; disulfide-linked. The disulfide link is formed within the large subunit homodimers. Mg(2+) is required as a cofactor. Post-translationally, the disulfide bond which can form in the large chain dimeric partners within the hexadecamer appears to be associated with oxidative stress and protein turnover.

It localises to the plastid. Its subcellular location is the chloroplast. It carries out the reaction 2 (2R)-3-phosphoglycerate + 2 H(+) = D-ribulose 1,5-bisphosphate + CO2 + H2O. The catalysed reaction is D-ribulose 1,5-bisphosphate + O2 = 2-phosphoglycolate + (2R)-3-phosphoglycerate + 2 H(+). In terms of biological role, ruBisCO catalyzes two reactions: the carboxylation of D-ribulose 1,5-bisphosphate, the primary event in carbon dioxide fixation, as well as the oxidative fragmentation of the pentose substrate in the photorespiration process. Both reactions occur simultaneously and in competition at the same active site. The polypeptide is Ribulose bisphosphate carboxylase large chain (Lupinus arcticus (Arctic lupine)).